The primary structure comprises 121 residues: Alpha-endosulfine (121 aa).

The tract at residues 1–53 is disordered; sequence MSQKQEEENPAEETGEEKQDTQEKEGILPERAEEAKLKAKYPSLGQKPGGSDF. Serine 2 carries the N-acetylserine modification. Serine 2 carries the post-translational modification Phosphoserine. Basic and acidic residues predominate over residues 16–37; sequence EEKQDTQEKEGILPERAEEAKL. Threonine 21 carries the phosphothreonine modification. Residue serine 43 is modified to Phosphoserine. Serine 67 is subject to Phosphoserine; by GWL. Positions 79 to 121 are disordered; sequence NKQLPSAGPDKNLVTGDHIPTPQDLPQRKSSLVTSKLAGGQVE. Serine 109 is modified (phosphoserine; by PKA).

Belongs to the endosulfine family. Interacts (when phosphorylated at Ser-67) with PPP2R2D. Interacts with ABCC8. Interacts with SNCA; interaction is disrupted when phosphorylated at Ser-109. In terms of processing, phosphorylation at Ser-67 by GWL during mitosis is essential for interaction with PPP2R2D (PR55-delta) and subsequent inactivation of PP2A. Phosphorylated by PKA. Widely expressed with high levels in skeletal muscle and brain and lower levels in the pancreas.

The protein localises to the cytoplasm. Its function is as follows. Protein phosphatase inhibitor that specifically inhibits protein phosphatase 2A (PP2A) during mitosis. When phosphorylated at Ser-67 during mitosis, specifically interacts with PPP2R2D (PR55-delta) and inhibits its activity, leading to inactivation of PP2A, an essential condition to keep cyclin-B1-CDK1 activity high during M phase. Also acts as a stimulator of insulin secretion by interacting with sulfonylurea receptor (ABCC8), thereby preventing sulfonylurea from binding to its receptor and reducing K(ATP) channel currents. This Homo sapiens (Human) protein is Alpha-endosulfine (ENSA).